A 249-amino-acid polypeptide reads, in one-letter code: ATP-dependent Clp protease proteolytic subunit (249 aa).

Serine 107 serves as the catalytic Nucleophile. The active site involves histidine 132. A disordered region spans residues 212–249; it reads ESASQDNSLDPDAPDESASQDNSLDPDAPDETRPPKLR.

Belongs to the peptidase S14 family. As to quaternary structure, component of the chloroplastic Clp protease core complex.

Its subcellular location is the plastid. It is found in the chloroplast stroma. The enzyme catalyses Hydrolysis of proteins to small peptides in the presence of ATP and magnesium. alpha-casein is the usual test substrate. In the absence of ATP, only oligopeptides shorter than five residues are hydrolyzed (such as succinyl-Leu-Tyr-|-NHMec, and Leu-Tyr-Leu-|-Tyr-Trp, in which cleavage of the -Tyr-|-Leu- and -Tyr-|-Trp bonds also occurs).. Its function is as follows. Cleaves peptides in various proteins in a process that requires ATP hydrolysis. Has a chymotrypsin-like activity. Plays a major role in the degradation of misfolded proteins. In Oenothera elata subsp. hookeri (Hooker's evening primrose), this protein is ATP-dependent Clp protease proteolytic subunit.